A 424-amino-acid polypeptide reads, in one-letter code: Endo-beta-1,4-galactanase (424 aa).

Residues 1 to 26 (MKNVLAVFVVLIFVLGAFGTSGPAEA) form the signal peptide. 142–145 (DPAK) lines the substrate pocket. Catalysis depends on E190, which acts as the Proton donor. Substrate contacts are provided by residues 229-230 (TN) and H263. E288 acts as the Nucleophile in catalysis. Substrate is bound at residue T292. Ca(2+)-binding residues include D297, D299, H301, and N303. 2 residues coordinate substrate: K307 and D384. Ca(2+) contacts are provided by S392 and D395.

It belongs to the glycosyl hydrolase 53 family. Ca(2+) is required as a cofactor.

It catalyses the reaction The enzyme specifically hydrolyzes (1-&gt;4)-beta-D-galactosidic linkages in type I arabinogalactans.. Its function is as follows. Involved in galactan degradation. Degrades arabinose-free galactan to galactooligosaccharides, producing galactotetraose as the main product along with galactotriose, galactobiose, and galactose. May hydrolyze the beta-1,4-galactan linkages of the galactan portion of arabinogalactan type I, a pectic plant polysaccharide from which most of the arabinose has been removed. The sequence is that of Endo-beta-1,4-galactanase (ganB) from Bacillus licheniformis (strain ATCC 14580 / DSM 13 / JCM 2505 / CCUG 7422 / NBRC 12200 / NCIMB 9375 / NCTC 10341 / NRRL NRS-1264 / Gibson 46).